A 139-amino-acid chain; its full sequence is Small ribosomal subunit protein bS16 (139 aa).

The segment at 84 to 139 (KGEPAPAPLLQPAEKAARPSFEAIGGEDEGKGEAITQKKKADKKDEAAAESSASEA) is disordered.

This sequence belongs to the bacterial ribosomal protein bS16 family.

This is Small ribosomal subunit protein bS16 from Streptomyces coelicolor (strain ATCC BAA-471 / A3(2) / M145).